The primary structure comprises 35 residues: Augerpeptide hheTx5 (35 aa).

Post-translationally, contains 4 disulfide bonds. As to expression, expressed by the venom duct.

It localises to the secreted. In Hastula hectica (Sea snail), this protein is Augerpeptide hheTx5.